The sequence spans 135 residues: Interleukin-4 (135 aa).

The signal sequence occupies residues 1–24; that stretch reads MGLTSQLIPVLVCLLVCTSHFVHG. Disulfide bonds link cysteine 27-cysteine 135, cysteine 48-cysteine 85, and cysteine 70-cysteine 105. A glycan (N-linked (GlcNAc...) asparagine) is linked at asparagine 62.

The protein belongs to the IL-4/IL-13 family.

The protein resides in the secreted. In terms of biological role, participates in at least several B-cell activation processes as well as of other cell types. It is a costimulator of DNA-synthesis. It induces the expression of class II MHC molecules on resting B-cells. It enhances both secretion and cell surface expression of IgE and IgG1. It also regulates the expression of the low affinity Fc receptor for IgE (CD23) on both lymphocytes and monocytes. Positively regulates IL31RA expression in macrophages. Stimulates autophagy in dendritic cells by interfering with mTORC1 signaling and through the induction of RUFY4. The chain is Interleukin-4 (IL4) from Bos taurus (Bovine).